Reading from the N-terminus, the 454-residue chain is Ornithine aminotransferase (454 aa).

K280 carries the N6-(pyridoxal phosphate)lysine modification.

It belongs to the class-III pyridoxal-phosphate-dependent aminotransferase family. Pyridoxal 5'-phosphate serves as cofactor.

The protein localises to the cytoplasm. The enzyme catalyses a 2-oxocarboxylate + L-ornithine = L-glutamate 5-semialdehyde + an L-alpha-amino acid. It participates in amino-acid biosynthesis; L-proline biosynthesis; L-glutamate 5-semialdehyde from L-ornithine: step 1/1. This Emericella nidulans (strain FGSC A4 / ATCC 38163 / CBS 112.46 / NRRL 194 / M139) (Aspergillus nidulans) protein is Ornithine aminotransferase (otaA).